Reading from the N-terminus, the 322-residue chain is Lipoyl synthase (322 aa).

Cys-69, Cys-74, Cys-80, Cys-95, Cys-99, Cys-102, and Ser-309 together coordinate [4Fe-4S] cluster. One can recognise a Radical SAM core domain in the interval 81–298; sequence FNHGTATFMI…KEIALELGFT (218 aa).

Belongs to the radical SAM superfamily. Lipoyl synthase family. It depends on [4Fe-4S] cluster as a cofactor.

The protein localises to the cytoplasm. The enzyme catalyses [[Fe-S] cluster scaffold protein carrying a second [4Fe-4S](2+) cluster] + N(6)-octanoyl-L-lysyl-[protein] + 2 oxidized [2Fe-2S]-[ferredoxin] + 2 S-adenosyl-L-methionine + 4 H(+) = [[Fe-S] cluster scaffold protein] + N(6)-[(R)-dihydrolipoyl]-L-lysyl-[protein] + 4 Fe(3+) + 2 hydrogen sulfide + 2 5'-deoxyadenosine + 2 L-methionine + 2 reduced [2Fe-2S]-[ferredoxin]. The protein operates within protein modification; protein lipoylation via endogenous pathway; protein N(6)-(lipoyl)lysine from octanoyl-[acyl-carrier-protein]: step 2/2. Its function is as follows. Catalyzes the radical-mediated insertion of two sulfur atoms into the C-6 and C-8 positions of the octanoyl moiety bound to the lipoyl domains of lipoate-dependent enzymes, thereby converting the octanoylated domains into lipoylated derivatives. This chain is Lipoyl synthase, found in Photobacterium profundum (strain SS9).